A 385-amino-acid polypeptide reads, in one-letter code: S-adenosylmethionine synthase (385 aa).

H16 is a binding site for ATP. Mg(2+) is bound at residue D18. E44 serves as a coordination point for K(+). The L-methionine site is built by E57 and Q100. The tract at residues 100-110 (QSPDINQGVDR) is flexible loop. ATP is bound by residues 164–166 (DGK), 230–231 (KF), D239, 245–246 (RK), A262, and K266. Position 239 (D239) interacts with L-methionine. Position 270 (K270) interacts with L-methionine.

This sequence belongs to the AdoMet synthase family. Homotetramer; dimer of dimers. Mg(2+) serves as cofactor. K(+) is required as a cofactor.

It is found in the cytoplasm. The enzyme catalyses L-methionine + ATP + H2O = S-adenosyl-L-methionine + phosphate + diphosphate. The protein operates within amino-acid biosynthesis; S-adenosyl-L-methionine biosynthesis; S-adenosyl-L-methionine from L-methionine: step 1/1. Functionally, catalyzes the formation of S-adenosylmethionine (AdoMet) from methionine and ATP. The overall synthetic reaction is composed of two sequential steps, AdoMet formation and the subsequent tripolyphosphate hydrolysis which occurs prior to release of AdoMet from the enzyme. The polypeptide is S-adenosylmethionine synthase (Helicobacter acinonychis (strain Sheeba)).